The primary structure comprises 54 residues: UPF0391 membrane protein Pmen_0080 (54 aa).

Helical transmembrane passes span 4–24 (WALT…GGIA) and 28–48 (AGIA…SFIM).

It belongs to the UPF0391 family.

The protein localises to the cell membrane. This is UPF0391 membrane protein Pmen_0080 from Ectopseudomonas mendocina (strain ymp) (Pseudomonas mendocina).